A 288-amino-acid chain; its full sequence is Oxaloacetate decarboxylase (288 aa).

Ser-47 lines the substrate pocket. Asp-85 serves as a coordination point for Mg(2+). Residues Arg-156 and His-232 each coordinate substrate.

It belongs to the isocitrate lyase/PEP mutase superfamily. Oxaloacetate decarboxylase family. Homotetramer; dimer of dimers. Mg(2+) serves as cofactor.

The enzyme catalyses oxaloacetate + H(+) = pyruvate + CO2. In terms of biological role, catalyzes the decarboxylation of oxaloacetate into pyruvate. Seems to play a role in maintaining cellular concentrations of bicarbonate and pyruvate. This is Oxaloacetate decarboxylase from Bradyrhizobium diazoefficiens (strain JCM 10833 / BCRC 13528 / IAM 13628 / NBRC 14792 / USDA 110).